The chain runs to 362 residues: Neutral protease 2 homolog MEP2 (362 aa).

The N-terminal stretch at 1-19 (MLFPSIVAALAALANPVLS) is a signal peptide. Positions 20-177 (LTIPQATGSE…SKAINPISAR (158 aa)) are excised as a propeptide. Intrachain disulfides connect cysteine 184-cysteine 255 and cysteine 262-cysteine 280. Histidine 304 contacts Zn(2+). Glutamate 305 is an active-site residue. Residues histidine 308 and aspartate 319 each contribute to the Zn(2+) site.

Belongs to the peptidase M35 family. It depends on Zn(2+) as a cofactor.

The protein localises to the secreted. It carries out the reaction Preferential cleavage of bonds with hydrophobic residues in P1'. Also 3-Asn-|-Gln-4 and 8-Gly-|-Ser-9 bonds in insulin B chain.. Secreted metalloproteinase that allows assimilation of proteinaceous substrates. Shows high activities on basic nuclear substrates such as histone and protamine. May be involved in virulence. This Coccidioides posadasii (strain C735) (Valley fever fungus) protein is Neutral protease 2 homolog MEP2 (MEP2).